A 287-amino-acid chain; its full sequence is Formamidopyrimidine-DNA glycosylase (287 aa).

The active-site Schiff-base intermediate with DNA is Pro2. The active-site Proton donor is Glu3. Catalysis depends on Lys58, which acts as the Proton donor; for beta-elimination activity. DNA-binding residues include His104, Arg123, and Arg166. The FPG-type zinc finger occupies 251–287 (RVYDREGQPCPTPGCKGMIGREVQAGRSTFFCPVCQV). Arg277 functions as the Proton donor; for delta-elimination activity in the catalytic mechanism.

Belongs to the FPG family. As to quaternary structure, monomer. Zn(2+) serves as cofactor.

The enzyme catalyses Hydrolysis of DNA containing ring-opened 7-methylguanine residues, releasing 2,6-diamino-4-hydroxy-5-(N-methyl)formamidopyrimidine.. It carries out the reaction 2'-deoxyribonucleotide-(2'-deoxyribose 5'-phosphate)-2'-deoxyribonucleotide-DNA = a 3'-end 2'-deoxyribonucleotide-(2,3-dehydro-2,3-deoxyribose 5'-phosphate)-DNA + a 5'-end 5'-phospho-2'-deoxyribonucleoside-DNA + H(+). In terms of biological role, involved in base excision repair of DNA damaged by oxidation or by mutagenic agents. Acts as a DNA glycosylase that recognizes and removes damaged bases. Has a preference for oxidized purines, such as 7,8-dihydro-8-oxoguanine (8-oxoG). Has AP (apurinic/apyrimidinic) lyase activity and introduces nicks in the DNA strand. Cleaves the DNA backbone by beta-delta elimination to generate a single-strand break at the site of the removed base with both 3'- and 5'-phosphates. This is Formamidopyrimidine-DNA glycosylase from Caulobacter sp. (strain K31).